Here is a 337-residue protein sequence, read N- to C-terminus: Trace amine-associated receptor 5 (337 aa).

The Extracellular segment spans residues 1-38 (MRAVLLPGSGEQPTAFCYQVNGSCPRTVHPLAIQVVIY). N21 is a glycosylation site (N-linked (GlcNAc...) asparagine). 2 disulfides stabilise this stretch: C24/C188 and C99/C192. A helical transmembrane segment spans residues 39–59 (LACAVGVLITVLGNLFVVFAV). Residues 60 to 70 (SYFKVLHTPTN) lie on the Cytoplasmic side of the membrane. The chain crosses the membrane as a helical span at residues 71–91 (FLLLSLALADMLLGLLVLPLS). Over 92-109 (TVRSVESCWFFGDFLCRL) the chain is Extracellular. Residues 110–130 (HTYLDTLFCLTSIFHLCFISI) form a helical membrane-spanning segment. Residues 131-154 (DRHCAICDPLLYPSKFTVRTALRY) lie on the Cytoplasmic side of the membrane. The helical transmembrane segment at 155 to 175 (IVAGWGIPAAYTAFFLYTDVV) threads the bilayer. The interval 176–189 (ERALSQWLEEMPCV) is extracellular Loop 2 (ECL2). Residues 176 to 204 (ERALSQWLEEMPCVGSCQLLFNKFWGWLN) lie on the Extracellular side of the membrane. Residues 205–225 (FPAFFVPCLIMISLYLKIFVV) traverse the membrane as a helical segment. The Cytoplasmic segment spans residues 226 to 253 (ATRQAQQIRTLSQSLAGAVKRERKAAKT). Residues 254–274 (LGIAVGIYLVCWLPFTVDTLV) form a helical membrane-spanning segment. Residues 275-284 (DSLLNFITPP) lie on the Extracellular side of the membrane. The chain crosses the membrane as a helical span at residues 285–307 (LVFDIFIWFAYFNSACNPIIYVF). At 308–337 (SYRWFRKALKLLLSREIFSPRTPTVDLYHD) the chain is on the cytoplasmic side.

The protein belongs to the G-protein coupled receptor 1 family. As to expression, specifically expressed in neurons of the olfactory epithelium, to discrete glomeruli predominantly localized to a confined bulb region. Present in the dorsal area of the main olfactory epithelium. Also present in the limbic brain areas receiving projection from the olfactory system and involved in the regulation of emotions. Also expressed in some brain regions outside the olfactory epithelium, such as the hippocampus, cerebellum, cortex, raphe nuclei, hypothalamus, and habenula.

The protein resides in the cell membrane. With respect to regulation, inhibited by 1-[(5,5- diphenyloxolan-2-yl)methyl]-4-(2-methoxyphenyl)piperazine and N-[(2,2-diphenyl-1,3-dioxolan-4-yl)methyl]-2-(2- methoxyphenoxy)ethan-1-amine small molecules. In terms of biological role, olfactory receptor specific for trimethylamine, a trace amine enriched in the urine of male mice, playing a role in social behavior. Also activated by N-methylpiperidine. Trimethylamine is present at high concentration in the urine of male mice after puberty and acts as an attractant. Trimethylamine-binding causes a conformation change that triggers signaling via G(s)-class of G alpha proteins (GNAL or GNAS). Also required to provide olfactory input into limbic brain areas to regulate emotional behaviors likely via modulation of the serotonin system. This Mus musculus (Mouse) protein is Trace amine-associated receptor 5.